The primary structure comprises 460 residues: uncharacterized protein (460 aa).

The TRAM domain occupies 9–67 (NFKKNDIFEAEVLDLTHEGQGVVKIDSFPFFVDNALPGERIKMHVLKVGKSFGFGRVDE). S-adenosyl-L-methionine is bound by residues Gln-292, Tyr-321, Glu-342, and Asp-390. Cys-417 functions as the Nucleophile in the catalytic mechanism.

It belongs to the class I-like SAM-binding methyltransferase superfamily. RNA M5U methyltransferase family.

This is an uncharacterized protein from Lactococcus lactis subsp. lactis (strain IL1403) (Streptococcus lactis).